We begin with the raw amino-acid sequence, 1017 residues long: Ubiquitin-like modifier-activating enzyme 1 (1017 aa).

2 consecutive repeat copies span residues 26-163 (SHET…GQLF) and 419-571 (GKTL…QVVV). The segment at 26–571 (SHETMKKITS…GTKGNTQVVV (546 aa)) is 2 approximate repeats. Residues A438, D464, R475, K488, and 536-537 (DN) contribute to the ATP site. Catalysis depends on C592, which acts as the Glycyl thioester intermediate. Positions 765 to 781 (IQTSENEPAPSSNTQQA) are enriched in polar residues. Residues 765-788 (IQTSENEPAPSSNTQQAGGDAEDD) form a disordered region.

This sequence belongs to the ubiquitin-activating E1 family. In terms of assembly, monomer.

It carries out the reaction ATP + ubiquitin + [E1 ubiquitin-activating enzyme]-L-cysteine = AMP + diphosphate + S-ubiquitinyl-[E1 ubiquitin-activating enzyme]-L-cysteine.. It functions in the pathway protein modification; protein ubiquitination. Its function is as follows. Catalyzes the first step in ubiquitin conjugation to mark cellular proteins for degradation through the ubiquitin-proteasome system. Activates ubiquitin by first adenylating its C-terminal glycine residue with ATP, and thereafter linking this residue to the side chain of a cysteine residue in E1, yielding a ubiquitin-E1 thioester and free AMP. In Dictyostelium discoideum (Social amoeba), this protein is Ubiquitin-like modifier-activating enzyme 1 (uba1).